The sequence spans 218 residues: Histidine biosynthesis bifunctional protein HisIE (218 aa).

The phosphoribosyl-AMP cyclohydrolase stretch occupies residues 1–131 (MAPHQFKSKG…GDYDLPPADT (131 aa)). Positions 132–218 (LSQVFRVVEE…VYRALQQRRR (87 aa)) are phosphoribosyl-ATP pyrophosphohydrolase.

This sequence in the N-terminal section; belongs to the PRA-CH family. It in the C-terminal section; belongs to the PRA-PH family.

It localises to the cytoplasm. The catalysed reaction is 1-(5-phospho-beta-D-ribosyl)-ATP + H2O = 1-(5-phospho-beta-D-ribosyl)-5'-AMP + diphosphate + H(+). The enzyme catalyses 1-(5-phospho-beta-D-ribosyl)-5'-AMP + H2O = 1-(5-phospho-beta-D-ribosyl)-5-[(5-phospho-beta-D-ribosylamino)methylideneamino]imidazole-4-carboxamide. The protein operates within amino-acid biosynthesis; L-histidine biosynthesis; L-histidine from 5-phospho-alpha-D-ribose 1-diphosphate: step 2/9. It participates in amino-acid biosynthesis; L-histidine biosynthesis; L-histidine from 5-phospho-alpha-D-ribose 1-diphosphate: step 3/9. The sequence is that of Histidine biosynthesis bifunctional protein HisIE from Gloeobacter violaceus (strain ATCC 29082 / PCC 7421).